A 902-amino-acid polypeptide reads, in one-letter code: HTH-type transcriptional regulator MalT (902 aa).

ATP is bound at residue 39-46 (SPAGYGKT). The region spanning 832-897 (ELVRTSPLTQ…EAIVTAENLL (66 aa)) is the HTH luxR-type domain. The H-T-H motif DNA-binding region spans 856–875 (NEQIAQELDVAGTTIKTHIR).

This sequence belongs to the MalT family. Monomer in solution. Oligomerizes to an active state in the presence of the positive effectors ATP and maltotriose.

Its activity is regulated as follows. Activated by ATP and maltotriose, which are both required for DNA binding. In terms of biological role, positively regulates the transcription of the maltose regulon whose gene products are responsible for uptake and catabolism of malto-oligosaccharides. Specifically binds to the promoter region of its target genes, recognizing a short DNA motif called the MalT box. The chain is HTH-type transcriptional regulator MalT from Vibrio parahaemolyticus serotype O3:K6 (strain RIMD 2210633).